The following is a 130-amino-acid chain: Classical arabinogalactan protein 7 (130 aa).

Positions 1 to 21 (MNSKIIEAFFIVALFTTSCLA) are cleaved as a signal peptide. Glutamine 22 is modified (pyrrolidone carboxylic acid). The interval 22–108 (QAPAPSPTTT…DASAPPPNAA (87 aa)) is disordered. 4-hydroxyproline occurs at positions 24, 26, 28, 35, and 36. 5 O-linked (Ara...) hydroxyproline glycosylation sites follow: proline 24, proline 26, proline 28, proline 35, and proline 36. Pro residues predominate over residues 33–68 (TPPPVATPPPAATPAPTTTPPPAVSPAPTSSPPSSA). A lipid anchor (GPI-anchor amidated asparagine) is attached at asparagine 106. The propeptide at 107–130 (AALTNKAFVVGSLVAAIIYAVVLA) is removed in mature form.

Belongs to the classical AGP family. O-glycosylated on hydroxyprolines; noncontiguous hydroxylproline residues are glycosylated with arabinogalactan.

It is found in the cell membrane. Its function is as follows. Proteoglycan that seems to be implicated in diverse developmental roles such as differentiation, cell-cell recognition, embryogenesis and programmed cell death. The sequence is that of Classical arabinogalactan protein 7 (AGP7) from Arabidopsis thaliana (Mouse-ear cress).